Consider the following 350-residue polypeptide: Uroporphyrinogen decarboxylase (350 aa).

Substrate is bound by residues 23–27 (RQAGR), Asp72, Tyr149, Ser204, and His318.

Belongs to the uroporphyrinogen decarboxylase family. Homodimer.

It localises to the cytoplasm. The enzyme catalyses uroporphyrinogen III + 4 H(+) = coproporphyrinogen III + 4 CO2. The protein operates within porphyrin-containing compound metabolism; protoporphyrin-IX biosynthesis; coproporphyrinogen-III from 5-aminolevulinate: step 4/4. Functionally, catalyzes the decarboxylation of four acetate groups of uroporphyrinogen-III to yield coproporphyrinogen-III. The chain is Uroporphyrinogen decarboxylase from Carboxydothermus hydrogenoformans (strain ATCC BAA-161 / DSM 6008 / Z-2901).